A 338-amino-acid polypeptide reads, in one-letter code: Mitochondrial glutathione transporter SLC25A40 (338 aa).

3 Solcar repeats span residues Val13–Leu131, Asn139–Trp223, and Pro233–Phe327. The next 6 membrane-spanning stretches (helical) occupy residues Met19 to Val39, Leu103 to Thr123, Cys142 to Leu162, Trp199 to Leu220, Phe239 to Val259, and Gly298 to Ile318.

This sequence belongs to the mitochondrial carrier (TC 2.A.29) family.

The protein resides in the mitochondrion inner membrane. It carries out the reaction glutathione(in) = glutathione(out). In terms of biological role, probable mitochondrial transporter required for glutathione import into mitochondria. Glutathione, which plays key roles in oxidative metabolism, is produced exclusively in the cytosol and is imported in many organelles. Mitochondrial glutathione is required for the activity and stability of proteins containing iron-sulfur clusters, as well as erythropoiesis. This Homo sapiens (Human) protein is Mitochondrial glutathione transporter SLC25A40.